The sequence spans 179 residues: Large ribosomal subunit protein uL5 (179 aa).

The protein belongs to the universal ribosomal protein uL5 family. Part of the 50S ribosomal subunit; part of the 5S rRNA/L5/L18/L25 subcomplex. Contacts the 5S rRNA and the P site tRNA. Forms a bridge to the 30S subunit in the 70S ribosome.

This is one of the proteins that bind and probably mediate the attachment of the 5S RNA into the large ribosomal subunit, where it forms part of the central protuberance. In the 70S ribosome it contacts protein S13 of the 30S subunit (bridge B1b), connecting the 2 subunits; this bridge is implicated in subunit movement. Contacts the P site tRNA; the 5S rRNA and some of its associated proteins might help stabilize positioning of ribosome-bound tRNAs. The protein is Large ribosomal subunit protein uL5 of Dehalococcoides mccartyi (strain ATCC BAA-2266 / KCTC 15142 / 195) (Dehalococcoides ethenogenes (strain 195)).